The following is a 538-amino-acid chain: MAKQIKFSEEARRAMLRGVDKLADAVKVTLGPKGRNVVLEKKFGSPLITNDGVTIAKEIELEDPFENMGAKLVAEVASKTNDIAGDGTTTATVLAQAMIREGLKNVAAGANPMGIRRGIEKAVAVAVEELKAISKPIKGKESIAQVAAISAADEEVGQLIAEAMERVGNDGVITLEESKGFTTELDVVEGMQFDRGYVSPNMITDTEKMEAVLENPYILITDKKVSSIQELLPALEQVVQQGRPLLIIAEDVEGEALATLVVNKLRGTFNAVRVKAPGFGDRRKAMLEDIAILTGGEVISEELGRELKSTTIASLGRASKVVVTKETTTIVEGAGDSKRIKAAINQIRAQLKETTSEFDREKLQERLAKLAGGVAVIKVGAATETELKERKLRIEDALNSTRAAVEEGIGAGGGTALMNIHNKVAAIEAEGDEATGVKIVLRAIEEPVRQIAQNAGLEGSIIVERLKNEKPGIGFNAATGEWVDMIEAGIVDPTKVTRSALQNAASVAAMVLTTEACVADKPEENKGNNNMPDMGGMM.

Residues 29–32 (TLGP), 86–90 (DGTTT), glycine 413, 476–478 (NAA), and aspartate 492 contribute to the ATP site.

The protein belongs to the chaperonin (HSP60) family. As to quaternary structure, forms a cylinder of 14 subunits composed of two heptameric rings stacked back-to-back. Interacts with the co-chaperonin GroES.

The protein localises to the cytoplasm. The catalysed reaction is ATP + H2O + a folded polypeptide = ADP + phosphate + an unfolded polypeptide.. Functionally, together with its co-chaperonin GroES, plays an essential role in assisting protein folding. The GroEL-GroES system forms a nano-cage that allows encapsulation of the non-native substrate proteins and provides a physical environment optimized to promote and accelerate protein folding. This chain is Chaperonin GroEL, found in Bacillus sp. (strain PS3).